We begin with the raw amino-acid sequence, 331 residues long: Ornithine carbamoyltransferase (331 aa).

Residues 55–58 (STRT), glutamine 82, arginine 106, and 133–136 (HPTQ) contribute to the carbamoyl phosphate site. L-ornithine-binding positions include asparagine 166, aspartate 230, and 234–235 (SM). Residues 272 to 273 (CL) and arginine 317 contribute to the carbamoyl phosphate site.

Belongs to the aspartate/ornithine carbamoyltransferase superfamily. OTCase family.

The protein localises to the cytoplasm. It catalyses the reaction carbamoyl phosphate + L-ornithine = L-citrulline + phosphate + H(+). It functions in the pathway amino-acid biosynthesis; L-arginine biosynthesis; L-arginine from L-ornithine and carbamoyl phosphate: step 1/3. Its function is as follows. Reversibly catalyzes the transfer of the carbamoyl group from carbamoyl phosphate (CP) to the N(epsilon) atom of ornithine (ORN) to produce L-citrulline. This is Ornithine carbamoyltransferase from Neisseria meningitidis serogroup C / serotype 2a (strain ATCC 700532 / DSM 15464 / FAM18).